A 423-amino-acid polypeptide reads, in one-letter code: Glutaminase (423 aa).

A glutaminase region spans residues Gly-27–Met-312. Residues Ser-69, Asn-119, Glu-165, Asn-172, Tyr-196, Tyr-248, and Val-266 each coordinate substrate. An STAS domain is found at Ala-321–Leu-423.

Belongs to the glutaminase family. In terms of assembly, homotetramer.

The enzyme catalyses L-glutamine + H2O = L-glutamate + NH4(+). The sequence is that of Glutaminase (glsA) from Corynebacterium efficiens (strain DSM 44549 / YS-314 / AJ 12310 / JCM 11189 / NBRC 100395).